The following is a 203-amino-acid chain: Holliday junction branch migration complex subunit RuvA (203 aa).

The domain I stretch occupies residues 1 to 63 (MIGKLSGKID…EEHIHLYGFL (63 aa)). Residues 64–142 (TLEEKNFFNL…KISSGSVIIK (79 aa)) are domain II. The segment at 143–149 (DSLNIKN) is flexible linker. The tract at residues 150–203 (ITPVASNEVIKALVNLGFSRFEAQNAVQGIIIQNPEISIDELIKTALKNRNAGL) is domain III.

It belongs to the RuvA family. Homotetramer. Forms an RuvA(8)-RuvB(12)-Holliday junction (HJ) complex. HJ DNA is sandwiched between 2 RuvA tetramers; dsDNA enters through RuvA and exits via RuvB. An RuvB hexamer assembles on each DNA strand where it exits the tetramer. Each RuvB hexamer is contacted by two RuvA subunits (via domain III) on 2 adjacent RuvB subunits; this complex drives branch migration. In the full resolvosome a probable DNA-RuvA(4)-RuvB(12)-RuvC(2) complex forms which resolves the HJ.

The protein resides in the cytoplasm. The RuvA-RuvB-RuvC complex processes Holliday junction (HJ) DNA during genetic recombination and DNA repair, while the RuvA-RuvB complex plays an important role in the rescue of blocked DNA replication forks via replication fork reversal (RFR). RuvA specifically binds to HJ cruciform DNA, conferring on it an open structure. The RuvB hexamer acts as an ATP-dependent pump, pulling dsDNA into and through the RuvAB complex. HJ branch migration allows RuvC to scan DNA until it finds its consensus sequence, where it cleaves and resolves the cruciform DNA. This chain is Holliday junction branch migration complex subunit RuvA, found in Rickettsia felis (strain ATCC VR-1525 / URRWXCal2) (Rickettsia azadi).